Consider the following 313-residue polypeptide: Ribosomal RNA small subunit methyltransferase H (313 aa).

S-adenosyl-L-methionine-binding positions include 35-37 (GGH), D55, F79, D101, and Q108.

It belongs to the methyltransferase superfamily. RsmH family.

Its subcellular location is the cytoplasm. The catalysed reaction is cytidine(1402) in 16S rRNA + S-adenosyl-L-methionine = N(4)-methylcytidine(1402) in 16S rRNA + S-adenosyl-L-homocysteine + H(+). Specifically methylates the N4 position of cytidine in position 1402 (C1402) of 16S rRNA. This Salmonella paratyphi A (strain ATCC 9150 / SARB42) protein is Ribosomal RNA small subunit methyltransferase H.